We begin with the raw amino-acid sequence, 200 residues long: NADH-quinone oxidoreductase subunit C (200 aa).

It belongs to the complex I 30 kDa subunit family. In terms of assembly, NDH-1 is composed of 14 different subunits. Subunits NuoB, C, D, E, F, and G constitute the peripheral sector of the complex.

Its subcellular location is the cell inner membrane. The enzyme catalyses a quinone + NADH + 5 H(+)(in) = a quinol + NAD(+) + 4 H(+)(out). Its function is as follows. NDH-1 shuttles electrons from NADH, via FMN and iron-sulfur (Fe-S) centers, to quinones in the respiratory chain. The immediate electron acceptor for the enzyme in this species is believed to be ubiquinone. Couples the redox reaction to proton translocation (for every two electrons transferred, four hydrogen ions are translocated across the cytoplasmic membrane), and thus conserves the redox energy in a proton gradient. This chain is NADH-quinone oxidoreductase subunit C, found in Paraburkholderia phytofirmans (strain DSM 17436 / LMG 22146 / PsJN) (Burkholderia phytofirmans).